The chain runs to 382 residues: N-acetyldiaminopimelate deacetylase (382 aa).

Asp-73 is a catalytic residue. The active-site Proton acceptor is the Glu-132.

It belongs to the peptidase M20A family. N-acetyldiaminopimelate deacetylase subfamily.

It catalyses the reaction N-acetyl-(2S,6S)-2,6-diaminopimelate + H2O = (2S,6S)-2,6-diaminopimelate + acetate. Its pathway is amino-acid biosynthesis; L-lysine biosynthesis via DAP pathway; LL-2,6-diaminopimelate from (S)-tetrahydrodipicolinate (acetylase route): step 3/3. Its function is as follows. Catalyzes the conversion of N-acetyl-diaminopimelate to diaminopimelate and acetate. The polypeptide is N-acetyldiaminopimelate deacetylase (Oenococcus oeni (strain ATCC BAA-331 / PSU-1)).